We begin with the raw amino-acid sequence, 667 residues long: Probable oxidoreductase YyaE (667 aa).

The 58-residue stretch at 2 to 59 (SKVHQSACPLNCWDSCGFLVTVDDGKVTKVDGDPNHPITEGKICGRGRMLETKTNSPD) folds into the 4Fe-4S Mo/W bis-MGD-type domain. Residues Cys9, Cys13, Cys17, and Cys45 each coordinate [4Fe-4S] cluster.

The protein belongs to the prokaryotic molybdopterin-containing oxidoreductase family. Requires Mo-bis(molybdopterin guanine dinucleotide) as cofactor.

The protein is Probable oxidoreductase YyaE (yyaE) of Bacillus subtilis (strain 168).